Reading from the N-terminus, the 284-residue chain is 4-diphosphocytidyl-2-C-methyl-D-erythritol kinase (284 aa).

K14 is an active-site residue. 98–108 contacts ATP; sequence PMGGGLGGGSS. D140 is an active-site residue.

Belongs to the GHMP kinase family. IspE subfamily.

The enzyme catalyses 4-CDP-2-C-methyl-D-erythritol + ATP = 4-CDP-2-C-methyl-D-erythritol 2-phosphate + ADP + H(+). Its pathway is isoprenoid biosynthesis; isopentenyl diphosphate biosynthesis via DXP pathway; isopentenyl diphosphate from 1-deoxy-D-xylulose 5-phosphate: step 3/6. Functionally, catalyzes the phosphorylation of the position 2 hydroxy group of 4-diphosphocytidyl-2C-methyl-D-erythritol. This is 4-diphosphocytidyl-2-C-methyl-D-erythritol kinase from Shewanella halifaxensis (strain HAW-EB4).